The primary structure comprises 804 residues: Endoplasmin (804 aa).

A signal peptide spans Met-1–Ala-21. An SRT pseudosubstrate motif motif is present at residues Ser-42–Thr-44. N-linked (GlcNAc...) asparagine glycosylation occurs at Asn-62. Ser-64 is modified (phosphoserine). Asn-107 carries N-linked (GlcNAc...) asparagine glycosylation. ATP contacts are provided by Asn-107, Asp-149, and Asn-162. The residue at position 168 (Lys-168) is an N6-(2-hydroxyisobutyryl)lysine. Phosphoserine is present on Ser-172. Phe-199 is an ATP binding site. Asn-217 is a glycosylation site (N-linked (GlcNAc...) asparagine). A Phosphothreonine; by CK2 modification is found at Thr-288. Residues Thr-288–Thr-323 are disordered. The segment covering Val-289–Glu-317 has biased composition (acidic residues). Ser-306 bears the Phosphoserine; by CK2 mark. Position 403 is a phosphoserine (Ser-403). Lys-404 is subject to N6-succinyllysine. The N-linked (GlcNAc...) asparagine glycan is linked to Asn-445. At Ser-447 the chain carries Phosphoserine. Lys-479 bears the N6-acetyllysine mark. Asn-481 and Asn-502 each carry an N-linked (GlcNAc...) asparagine glycan. Lys-633 carries the N6-succinyllysine modification. Residues Asp-750–Leu-804 form a disordered region. Positions Glu-757–Gln-791 are enriched in acidic residues. Phosphothreonine; by CK2 is present on residues Thr-766, Thr-770, Thr-774, and Thr-786. A compositionally biased stretch (basic and acidic residues) spans Glu-792–Leu-804. The short motif at Lys-801 to Leu-804 is the Prevents secretion from ER element.

This sequence belongs to the heat shock protein 90 family. Homodimer; disulfide-linked. Component of an EIF2 complex at least composed of CELF1/CUGBP1, CALR, CALR3, EIF2S1, EIF2S2, HSP90B1 and HSPA5. Part of a large chaperone multiprotein complex comprising DNAJB11, HSP90B1, HSPA5, HYOU, PDIA2, PDIA4, PDIA6, PPIB, SDF2L1, UGGT1 and very small amounts of ERP29, but not, or at very low levels, CALR nor CANX. Interacts with AIMP1; regulates its retention in the endoplasmic reticulum. Hyperglycosylated form interacts with OS9; promoting its degradation by the endoplasmic reticulum associated degradation (ERAD). Interacts with CNPY3. This interaction is disrupted in the presence of ATP. Interacts with TLR4 and TLR9, but not with TLR3. Interacts with MZB1 in a calcium-dependent manner. Interacts with METTL23. Interacts with IL1B; the interaction facilitates cargo translocation into the ERGIC. Interacts with EIF2AK3. Post-translationally, phosphorylated by CK2. In terms of processing, N-glycosylated cotranslationally at Asn-217 by STT3A-containing OST-A complex: this glycosylation is constitutive. In response to various stress, 5 additional facultative sites (Asn-62, Asn-107, Asn-445, Asn-481 and Asn-502) can be glycosylated post-translationally by STT3B-containing OST-B complex, leading to a hyperglycosylated form that is degraded by the ER-associated degradation (ERAD) pathway. In normal conditions, the OST-A complex together with CCDC134 prevent glycosylation at facultative sites during protein folding, thereby preventing hyperglycosylation. Mechanistically, nascent HSP90B1 is tethered during translation to a specialized CCDC134-containing translocon that forms a microenvironment for its folding, in which STT3A associates with the SRT pseudosubstrate motif, and prevents access to facultative glycosylation sites until folding is completed, rendering its facultative sites inaccessible to the OST-B complex. As to expression, detected in heart muscle (at protein level).

It localises to the endoplasmic reticulum lumen. The protein localises to the sarcoplasmic reticulum lumen. The protein resides in the melanosome. It catalyses the reaction ATP + H2O = ADP + phosphate + H(+). In terms of biological role, ATP-dependent chaperone involved in the processing of proteins in the endoplasmic reticulum, regulating their transport. Together with MESD, acts as a modulator of the Wnt pathway by promoting the folding of LRP6, a coreceptor of the canonical Wnt pathway. When associated with CNPY3, required for proper folding of Toll-like receptors. Promotes folding and trafficking of TLR4 to the cell surface. May participate in the unfolding of cytosolic leaderless cargos (lacking the secretion signal sequence) such as the interleukin 1/IL-1 to facilitate their translocation into the ERGIC (endoplasmic reticulum-Golgi intermediate compartment) and secretion; the translocation process is mediated by the cargo receptor TMED10. May also function in endoplasmic reticulum associated degradation (ERAD); it is however unclear whether it participates to ERAD or is a target of ERAD. This Canis lupus familiaris (Dog) protein is Endoplasmin (HSP90B1).